We begin with the raw amino-acid sequence, 1891 residues long: MTSRLLETGSTPFIRNTAAQQLADVQKQHPDELFNLLGRILPYLRSKSWDTRAAAAKAIGLIVANADTFDPNQDDGQEIKKAENDDLDVDIKSEEELLSPMDDSLLQLERLDLPSILKYGKRLLGSAGKEYEYSLAAMDPASRLQHQKKTLTSRLGLAGEYIEEDLINDNDLVSKPVVKEEPSFVASREHSIQGTSQPLASPIEPANGEESGLSKRQLNQLKRKNKQSARMGANKVRVVDLSSRRASENVTTPSVATPYPIKSENGEERNGDSKPDYFSLDRSAGDDESKIVSEFKGASVPENPLLQPESTEEGPNPNWPFELMCDILMVDLFDPNWEIRHGAAMALREVIRIQGAGAGRVQGKSRAENDILNRKWLDDLACRLLCVLMLDRFGDYISDNVVAPIRETVGQTLGALLSQLPSRSVISVYKCLYRIIMQTDLGLERPIWEVCHGGMIGLRYLVAVRKDLLIKDSKLMDGVLEAVMKGLGDYDDDVRAVSAATLVPIAEEFVKTRQSTLGTLMTIVWDCLSNLQDDLSASTGSVMDLLAKLCTFQEVLDAMKANAAVNPESSFGKLVPRLYPFLRHTITSVRSAVLRALMTFLQLEGEGTDEWVDGKTVRLIFQNLLVERNEGVLKQSLQVWSELLNSLETRGSFKSESDLLSHIKPLITLSMGPFGVPRYPVPMDASLFIKPSGLPFPSSAAAPARSSPASNTPEGTKGRRRKSEKKEAPPPSAHNVDGHMLQGDIDLVGADTMLRSKIYAARALGQLLFVWDQNQLPSLWQSILEGLNHSASTSQLASAMIVEEYAKLSGPSGRYASTLCENLRPIIEGERPPWYSDIACYLHVARAQCHSLLNTFRDHAHVPGSRLPVLAVIVQGDPEAGPNAFSLSDAEKVIGPDFERLKKGLTPAQRITALQVLNDTRATAESAVNEARNVREQRDLRVRAAAAGALVALSDIPKKPSHIIKGMMDSIKKEENAELQQRSATAITSLVEYYTTSAKRGPVDKVIGNLVKYCCVDTSETPEFHHNAMLEKSILSLRKEEDRRDHPDAAKFEREAKEARIMRRGAKEALEQLAVKFGSELMAKVPNLASLIERPLKEALAADELPANIRDPENELGQEVVDGLSTLRAILPKFHSGLYPWVVDLLPLVVKALQCKLSVIRYAAAKCFATICSVITVEGMTMLVEKVLPMINDALDVHHRQGAVECIYHLIHVMEDGILPYVIFLVVPVLGRMSDSDNEVRLLATTSFATLVKLVPLEAGIPDPPGLSEELLKGRDRERQFMAQMLDVRKVEEFKIPVAIKAELRPYQQEGVNWLAFLNRYNLHGILCDDMGLGKTLQTICIVASDHHMRAEEFARTQKPEVRKLPSLIVCPPSLSGHWQQELKQYAPFLNCVAYVGPPAERSRLQSALPNADIVVTSYDICRNDNEVLNPINWNYCVLDEGHLIKNPKAKATIAVKRLLSNHRLILSGTPIQNNVLELWSLFDFLMPGFLGTEKVFLDRFAKPIAASRFSKSSSKEQEAGALAIEALHKQVLPFLLRRLKEEVLNDLPPKIIQNYYCDPSELQRKLFEDFTKKEQKALQDKVGSTEKADKEHIFQALQYMRRLCNSPALVVKEGHKQYNEVQQYLAAKHSNIRDVAHAPKLSALRDLLIDCGIGVDSPSEGDLSGASYVSPHRALIFCQMKEMLDIVQSEVFNKLLPSVQFLRLDGSVEATRRQDIVNRFNTDPSYDVLLLTTSVGGLGLNLTGADTVIFVEHDWNPQKDIQAMDRAHRIGQKKVVNVYRLITRGTLEEKILNLQRFKIDVASTVVNQQNAGLGTMDTDQLLDLFNLGETAETAEKPSDAAGNEVDMVDIDGNVKEKGKKGWLDDLGELWDDRQYQEEYNLDSFLATMKG.

An HEAT 1 repeat occupies 30–68; that stretch reads PDELFNLLGRILPYLRSKSWDTRAAAAKAIGLIVANADT. Disordered stretches follow at residues 184 to 216, 241 to 283, and 295 to 316; these read FVASREHSIQGTSQPLASPIEPANGEESGLSKR, LSSR…LDRS, and FKGASVPENPLLQPESTEEGPN. A compositionally biased stretch (basic and acidic residues) spans 264 to 275; sequence ENGEERNGDSKP. HEAT repeat units lie at residues 473–511 and 569–606; these read SKLMDGVLEAVMKGLGDYDDDVRAVSAATLVPIAEEFVK and SSFGKLVPRLYPFLRHTITSVRSAVLRALMTFLQLEGE. Over residues 699–710 the composition is skewed to low complexity; sequence SAAAPARSSPAS. A disordered region spans residues 699–740; it reads SAAAPARSSPASNTPEGTKGRRRKSEKKEAPPPSAHNVDGHM. 4 HEAT repeats span residues 957–996, 1139–1177, 1181–1216, and 1219–1257; these read PKKPSHIIKGMMDSIKKEENAELQQRSATAITSLVEYYTT, YPWVVDLLPLVVKALQCKLSVIRYAAAKCFATICSVITV, TMLVEKVLPMINDALDVHHRQGAVECIYHLIHVMED, and LPYVIFLVVPVLGRMSDSDNEVRLLATTSFATLVKLVPL. Residues 1316-1489 form the Helicase ATP-binding domain; it reads AFLNRYNLHG…WSLFDFLMPG (174 aa). ATP is bound at residue 1329–1336; sequence DDMGLGKT. Residues 1440-1443 carry the DEAH box motif; sequence DEGH. The HEAT 8 repeat unit spans residues 1526–1565; that stretch reads EALHKQVLPFLLRRLKEEVLNDLPPKIIQNYYCDPSELQR. The Helicase C-terminal domain maps to 1663 to 1813; sequence DLSGASYVSP…STVVNQQNAG (151 aa).

It belongs to the SNF2/RAD54 helicase family. As to quaternary structure, forms the NCT transcriptional regulatory complex with nctA and nctB.

Its subcellular location is the nucleus. In terms of biological role, regulates transcription in association with TATA binding protein (TBP). Removes TBP from the TATA box via its C-terminal ATPase activity. Both transcription activation and repression require its ATPase activity. Part of the NCT transcriptional regulatory complex that acts as a key regulator of ergosterol biosynthesis and the azole exporter cdr1B. The NCT complex binds the promoters of genes linked to azole susceptibility, and especially represses the expression of cdr1B transporter. This chain is TATA-binding protein-associated factor mot1, found in Aspergillus fumigatus (strain CBS 144.89 / FGSC A1163 / CEA10) (Neosartorya fumigata).